The following is an 855-amino-acid chain: MICAL-like protein 1 (855 aa).

One can recognise a Calponin-homology (CH) domain in the interval 2–108 (AGPRGALLAW…YVSQYYNHFT (107 aa)). Disordered stretches follow at residues 110-165 (SGQA…SSAC), 226-253 (GRSG…EDSD), and 269-659 (QASS…HGFP). The segment covering 124 to 135 (PAAPSPTSTSPA) has biased composition (low complexity). The 64-residue stretch at 163-226 (SACAACGQRV…ERCTRLGLGG (64 aa)) folds into the LIM zinc-binding domain. The span at 269-278 (QASSEVQPHT) shows a compositional bias: polar residues. A phosphoserine mark is found at S293 and S307. Residues 308–325 (ESSALTPPTPRPRSSLQQ) are compositionally biased toward polar residues. T313 and T316 each carry phosphothreonine. Residues 356–367 (LSERMTAPRKDP) show a composition bias toward basic and acidic residues. Residues 423–425 (NPF) carry the NPF1 motif. Residues 425–434 (FEEEEEEEEA) are compositionally biased toward acidic residues. A compositionally biased stretch (pro residues) spans 439-449 (VPSPAPAPPET). A phosphothreonine mark is found at T461 and T463. Residues S464, S465, S478, and S480 each carry the phosphoserine modification. Positions 499–514 (PSPALSVESLSSESSS) are enriched in low complexity. Residues 542 to 554 (PGTSANSVTPSAH) are compositionally biased toward polar residues. Low complexity predominate over residues 555-570 (SSLSSSGELGQPSGEQ). Position 613 is a phosphoserine (S613). The short motif at 625-627 (NPF) is the NPF2 element. The mediates the interaction with RAB13 and intramolecular interaction with the calponin-homology (CH) domain stretch occupies residues 644-855 (KGAKPVRPPA…AKSKAPTGKS (212 aa)). One can recognise a bMERB domain in the interval 663-810 (RKVQADQYIP…EEEEDKMLET (148 aa)). Positions 679 to 703 (EMDSIERQLDALEHSGVLLEEKLRG) form a coiled coil. Phosphoserine occurs at positions 682 and 732. The segment at 692-855 (HSGVLLEEKL…AKSKAPTGKS (164 aa)) is necessary and sufficient to associate with tubular recycling endosome membranes, mediate phosphatidic acid-binding and membrane tubulation. Residues 794–822 (LDEDRQREEEEDKMLETMIKKKDFQREAE) are a coiled coil. Residues 815–826 (KDFQREAESDSK) show a composition bias toward basic and acidic residues. Positions 815–855 (KDFQREAESDSKKKGKFKTMKVLKLLGNKRDAKSKAPTGKS) are disordered.

As to quaternary structure, homooligomer. Interacts (via NPF1 motif) with EHD1 (via EH domain); the interaction is direct and probably recruits EHD1 to membranes. Interacts with EHD3 (via EH domain). Interacts with RAB35 (GTP-bound form); the interaction is direct and probably recruits MICALL1 to membranes. Interacts with ACAP2; the interaction is indirect through RAB35. Interacts with RAB8A (GTP-bound form); regulates RAB8A association with recycling endosomes. Interacts with RAB13 (GTP-bound form). Interacts with ARF6 (GTP-bound form). Interacts with PACSIN2 (via the SH3 domain). Interacts with DPYSL2.

The protein localises to the recycling endosome membrane. It is found in the late endosome membrane. It localises to the cell projection. Its subcellular location is the cilium membrane. The protein resides in the cytoplasm. The protein localises to the cytoskeleton. It is found in the microtubule organizing center. It localises to the centrosome. Its subcellular location is the centriole. Its function is as follows. Lipid-binding protein with higher affinity for phosphatidic acid, a lipid enriched in recycling endosome membranes. On endosome membranes, acts as a downstream effector of Rab proteins recruiting cytosolic proteins to regulate membrane tubulation. Involved in a late step of receptor-mediated endocytosis regulating for instance endocytosed-EGF receptor trafficking. Alternatively, regulates slow endocytic recycling of endocytosed proteins back to the plasma membrane. Also involved in cargo protein delivery to the plasma membrane. Plays a role in ciliogenesis coordination, recruits EHD1 to primary cilium where it is anchored to the centriole through interaction with tubulins. May indirectly play a role in neurite outgrowth. The polypeptide is MICAL-like protein 1 (Micall1) (Rattus norvegicus (Rat)).